The sequence spans 311 residues: Cell division protein ZipA (311 aa).

Residues 1–5 (MQELR) lie on the Periplasmic side of the membrane. Residues 6 to 26 (FVLIVVGALAIMALLFHGLWT) form a helical membrane-spanning segment. Topologically, residues 27 to 311 (SKKEGKAKFG…QIVEFKAANA (285 aa)) are cytoplasmic. The segment covering 32-54 (KAKFGDKPLSKLDLGESEPKESE) has biased composition (basic and acidic residues). Residues 32–60 (KAKFGDKPLSKLDLGESEPKESEMYVAPE) are disordered.

The protein belongs to the ZipA family. In terms of assembly, interacts with FtsZ via their C-terminal domains.

It is found in the cell inner membrane. Essential cell division protein that stabilizes the FtsZ protofilaments by cross-linking them and that serves as a cytoplasmic membrane anchor for the Z ring. Also required for the recruitment to the septal ring of downstream cell division proteins. The polypeptide is Cell division protein ZipA (Vibrio vulnificus (strain CMCP6)).